The sequence spans 858 residues: MHCQLGGQARALIFLMFESCRNSWHVSPWSSVPFLPSPCLFFSFSALPFLHPLSQLIACRGSSATWLFPVSSGTLVLRYALAASPPRGTMRPSTNPRTAEEGRPWLIHATQTGPQTASVLSLFPAVNAGFFSACRQHRGGRPPCLLNHRRLLLGLVSVLTVFLSCLPFTNATVSPAALQDVCYAFGNISRKLSSFLVPSRVTCPRGATPLSGVEAQDSLEHPEIPDFRFLVYDVKNGEGFHLQKEVIYRVALVISLLNARSAQQGRMTDVHTAEKAREDRGHPQASHMLCASSSFSHACSARSTFPFFPMWVLVLPPWCRLAHWHFSEETITAMAENSWLKHVRWGTFFDFQDLGERLPVMEYEDFLTYQLMRPDPWGERRQRKEKQTTPVELDVVLSVRFSSTPSSRSLPFCACLSSRASEIADEQAQRDDVCCNVNDLPGCPQIHAALTPQERQRAPAQRGGDPREEIDEQTGEFNEGHNPSGDGEREKRKPGRRSDTSRSRKEIQEEAKVSDTWSGVSLWLAGFCETVRALEMWCASLYIADAPRIADLLWRSVAERPPGAIQTVWLKFGENLLVPWPDVLLDAHLLDMLHVHPKLRQIGDLFINKFLSNRDKTETGKGERASTEGGTEGDENLAKHGYIAAHLRRTDFLYLKRSVPLQRAAAYLVSRMKEHGVFKAFICTDGSEDEKRELRDAVRRVGDAASSSPYTVVFFDLPTVRRLMIKTLEASSHVSDDGSFHDLKAVETPGYSGPNHISLLLHPGITALIEVWIAARAAYFIGTKDSRFSQAIRWERHLMGHPLDSSLEVFCVDSSPDQTGGQAQGKCFATKSHDPPEGRSRSELRRKYWPSLDPSSTL.

At 1-150 (MHCQLGGQAR…RPPCLLNHRR (150 aa)) the chain is on the cytoplasmic side. A helical; Signal-anchor for type II membrane protein membrane pass occupies residues 151 to 171 (LLLGLVSVLTVFLSCLPFTNA). The Lumenal portion of the chain corresponds to 172 to 858 (TVSPAALQDV…WPSLDPSSTL (687 aa)). 237-241 (GEGFH) is a binding site for GDP-beta-L-fucose. Glu-238 (proton acceptor) is an active-site residue. Residues 448–510 (AALTPQERQR…SRSRKEIQEE (63 aa)) are disordered. The segment covering 486–510 (DGEREKRKPGRRSDTSRSRKEIQEE) has biased composition (basic and acidic residues). GDP-beta-L-fucose-binding positions include 646–648 (HLR) and 787–788 (RF). The segment at 819–858 (TGGQAQGKCFATKSHDPPEGRSRSELRRKYWPSLDPSSTL) is disordered. A compositionally biased stretch (basic and acidic residues) spans 831 to 846 (KSHDPPEGRSRSELRR).

It belongs to the glycosyltransferase 68 family.

The protein resides in the endoplasmic reticulum membrane. The catalysed reaction is L-seryl-[protein] + GDP-beta-L-fucose = 3-O-(alpha-L-fucosyl)-L-seryl-[protein] + GDP + H(+). The enzyme catalyses L-threonyl-[protein] + GDP-beta-L-fucose = 3-O-(alpha-L-fucosyl)-L-threonyl-[protein] + GDP + H(+). It participates in protein modification; protein glycosylation. Catalyzes the reaction that attaches fucose through an O-glycosidic linkage to a conserved serine or threonine residue in the consensus sequence C1-X-X-S/T-C2 of thrombospondin type I repeats (TSRs) where C1 and C2 are the first and second cysteines of the repeat, respectively. O-fucosylates microneme protein MIC2 and may play a role in its stabilization. Probably by regulating protein O-fucosylation, may play a role in tachyzoite adhesion to and/or invasion of host cells; however, POFUT2 involvement in adhesion/invasion is controversial. The protein is GDP-fucose protein O-fucosyltransferase 2 of Toxoplasma gondii (strain ATCC 50853 / GT1).